The following is a 298-amino-acid chain: 4-hydroxy-tetrahydrodipicolinate synthase (298 aa).

Pyruvate is bound at residue Thr-48. Tyr-137 acts as the Proton donor/acceptor in catalysis. Residue Lys-166 is the Schiff-base intermediate with substrate of the active site. Ile-207 contributes to the pyruvate binding site.

The protein belongs to the DapA family. As to quaternary structure, homotetramer; dimer of dimers.

The protein resides in the cytoplasm. It catalyses the reaction L-aspartate 4-semialdehyde + pyruvate = (2S,4S)-4-hydroxy-2,3,4,5-tetrahydrodipicolinate + H2O + H(+). It functions in the pathway amino-acid biosynthesis; L-lysine biosynthesis via DAP pathway; (S)-tetrahydrodipicolinate from L-aspartate: step 3/4. Functionally, catalyzes the condensation of (S)-aspartate-beta-semialdehyde [(S)-ASA] and pyruvate to 4-hydroxy-tetrahydrodipicolinate (HTPA). The polypeptide is 4-hydroxy-tetrahydrodipicolinate synthase (Campylobacter jejuni subsp. doylei (strain ATCC BAA-1458 / RM4099 / 269.97)).